Consider the following 387-residue polypeptide: Galanin receptor type 2 (387 aa).

Over 1–28 the chain is Extracellular; the sequence is MNVSGCPGAGNASQAGGGGGWHPEAVIV. Asparagine 2 and asparagine 11 each carry an N-linked (GlcNAc...) asparagine glycan. Residues 29–49 traverse the membrane as a helical segment; that stretch reads PLLFALIFLVGTVGNTLVLAV. The Cytoplasmic portion of the chain corresponds to 50–60; it reads LLRGGQAVSTT. A helical membrane pass occupies residues 61–81; the sequence is NLFILNLGVADLCFILCCVPF. Topologically, residues 82–99 are extracellular; it reads QATIYTLDGWVFGSLLCK. Cysteine 98 and cysteine 175 are disulfide-bonded. A helical transmembrane segment spans residues 100–121; it reads AVHFLIFLTMHASSFTLAAVSL. Residues 122–141 lie on the Cytoplasmic side of the membrane; the sequence is DRYLAIRYPLHSRELRTPRN. Residues 142–162 traverse the membrane as a helical segment; it reads ALAAIGLIWGLSLLFSGPYLS. Residues 163 to 187 lie on the Extracellular side of the membrane; the sequence is YYRQSQLANLTVCHPAWSAPRRRAM. The chain crosses the membrane as a helical span at residues 188–208; it reads DICTFVFSYLLPVLVLGLTYA. The Cytoplasmic portion of the chain corresponds to 209 to 237; the sequence is RTLRYLWRAVDPVAAGSGARRAKRKVTRM. A helical membrane pass occupies residues 238-258; that stretch reads ILIVAALFCLCWMPHHALILC. Over 259 to 260 the chain is Extracellular; the sequence is VW. Residues 261 to 281 traverse the membrane as a helical segment; it reads FGQFPLTRATYALRILSHLVS. Topologically, residues 282 to 387 are cytoplasmic; it reads YANSCVNPIV…GDSILTVDVA (106 aa).

The protein belongs to the G-protein coupled receptor 1 family. As to expression, expressed abundantly within the central nervous system in both hypothalamus and hippocampus. In peripheral tissues, the strongest expression was observed in heart, kidney, liver, and small intestine.

It localises to the cell membrane. Functionally, receptor for the hormone galanin and GALP. Receptor for the hormone spexin-1. The activity of this receptor is mediated by G proteins that activate the phospholipase C/protein kinase C pathway (via G(q)) and that inhibit adenylyl cyclase (via G(i)). The polypeptide is Galanin receptor type 2 (GALR2) (Homo sapiens (Human)).